A 547-amino-acid chain; its full sequence is Chaperonin GroEL (547 aa).

Residues 30–33 (TLGP), Lys51, 87–91 (DGTTT), Gly415, 479–481 (NAA), and Asp495 each bind ATP.

It belongs to the chaperonin (HSP60) family. Forms a cylinder of 14 subunits composed of two heptameric rings stacked back-to-back. Interacts with the co-chaperonin GroES.

Its subcellular location is the cytoplasm. It catalyses the reaction ATP + H2O + a folded polypeptide = ADP + phosphate + an unfolded polypeptide.. Functionally, together with its co-chaperonin GroES, plays an essential role in assisting protein folding. The GroEL-GroES system forms a nano-cage that allows encapsulation of the non-native substrate proteins and provides a physical environment optimized to promote and accelerate protein folding. This is Chaperonin GroEL from Cupriavidus taiwanensis (strain DSM 17343 / BCRC 17206 / CCUG 44338 / CIP 107171 / LMG 19424 / R1) (Ralstonia taiwanensis (strain LMG 19424)).